The chain runs to 152 residues: Small ribosomal subunit protein uS9 (152 aa).

This sequence belongs to the universal ribosomal protein uS9 family.

The protein is Small ribosomal subunit protein uS9 of Mycobacterium ulcerans (strain Agy99).